The following is a 538-amino-acid chain: Phosphoenolpyruvate carboxykinase (ATP) (538 aa).

Residue arginine 64 participates in substrate binding. Arginine 152 provides a ligand contact to ATP. Residues tyrosine 205 and lysine 211 each coordinate substrate. ATP-binding positions include lysine 211, histidine 230, and 246 to 254 (GLSGTGKTT). Lysine 211 and histidine 230 together coordinate Mn(2+). Residue aspartate 267 participates in Mn(2+) binding. ATP is bound by residues glutamate 295, arginine 331, arginine 344, 447 to 448 (RI), and threonine 453. Arginine 331 lines the substrate pocket.

It belongs to the phosphoenolpyruvate carboxykinase (ATP) family. In terms of assembly, monomer. It depends on Mn(2+) as a cofactor.

It is found in the cytoplasm. The catalysed reaction is oxaloacetate + ATP = phosphoenolpyruvate + ADP + CO2. It functions in the pathway carbohydrate biosynthesis; gluconeogenesis. Functionally, involved in gluconeogenesis. Catalyzes the conversion of oxaloacetate (OAA) to phosphoenolpyruvate (PEP) through direct phosphoryl transfer between the nucleoside triphosphate and OAA. The sequence is that of Phosphoenolpyruvate carboxykinase (ATP) from Actinobacillus succinogenes (strain ATCC 55618 / DSM 22257 / CCUG 43843 / 130Z).